The sequence spans 311 residues: Ribonuclease HIII (311 aa).

The RNase H type-2 domain occupies 93–310 (LSAIGSDEVG…TKKALDIAKH (218 aa)). Residues Asp-99, Glu-100, and Asp-204 each coordinate a divalent metal cation.

The protein belongs to the RNase HII family. RnhC subfamily. Mn(2+) is required as a cofactor. The cofactor is Mg(2+).

It localises to the cytoplasm. It catalyses the reaction Endonucleolytic cleavage to 5'-phosphomonoester.. Functionally, endonuclease that specifically degrades the RNA of RNA-DNA hybrids. The sequence is that of Ribonuclease HIII from Geobacillus kaustophilus (strain HTA426).